A 115-amino-acid polypeptide reads, in one-letter code: U3-lycotoxin-Ls1a (115 aa).

The N-terminal stretch at 1-20 is a signal peptide; that stretch reads MKFVLLFGVLLVTFFSYSSA. Positions 21-44 are excised as a propeptide; that stretch reads EMLDDFDQADEDELLSLIEKGEAR. 4 disulfide bridges follow: C48-C63, C55-C72, C62-C87, and C74-C85.

Belongs to the neurotoxin 19 (CSTX) family. 01 subfamily. In terms of tissue distribution, expressed by the venom gland.

It localises to the secreted. The sequence is that of U3-lycotoxin-Ls1a from Lycosa singoriensis (Wolf spider).